The primary structure comprises 594 residues: UvrABC system protein C (594 aa).

One can recognise a GIY-YIG domain in the interval 17–94; that stretch reads LEPGCYLMKD…IKQYQPRYNI (78 aa). In terms of domain architecture, UVR spans 199 to 234; it reads KTILHHLEDRMNKASEQLDFEQAKEYRDMIQHIHNL.

The protein belongs to the UvrC family. In terms of assembly, interacts with UvrB in an incision complex.

It is found in the cytoplasm. Functionally, the UvrABC repair system catalyzes the recognition and processing of DNA lesions. UvrC both incises the 5' and 3' sides of the lesion. The N-terminal half is responsible for the 3' incision and the C-terminal half is responsible for the 5' incision. This chain is UvrABC system protein C, found in Staphylococcus epidermidis (strain ATCC 12228 / FDA PCI 1200).